Consider the following 106-residue polypeptide: Putative double-stranded DNA mimic protein VV1_3059 (106 aa).

This sequence belongs to the putative dsDNA mimic protein family.

May act as a double-stranded DNA (dsDNA) mimic. Probably regulates the activity of a dsDNA-binding protein. The protein is Putative double-stranded DNA mimic protein VV1_3059 of Vibrio vulnificus (strain CMCP6).